The following is a 173-amino-acid chain: Crossover junction endodeoxyribonuclease RuvC (173 aa).

Residues Asp-8, Glu-67, and Asp-139 contribute to the active site. Mg(2+)-binding residues include Asp-8, Glu-67, and Asp-139.

The protein belongs to the RuvC family. As to quaternary structure, homodimer which binds Holliday junction (HJ) DNA. The HJ becomes 2-fold symmetrical on binding to RuvC with unstacked arms; it has a different conformation from HJ DNA in complex with RuvA. In the full resolvosome a probable DNA-RuvA(4)-RuvB(12)-RuvC(2) complex forms which resolves the HJ. Mg(2+) is required as a cofactor.

The protein localises to the cytoplasm. It carries out the reaction Endonucleolytic cleavage at a junction such as a reciprocal single-stranded crossover between two homologous DNA duplexes (Holliday junction).. The RuvA-RuvB-RuvC complex processes Holliday junction (HJ) DNA during genetic recombination and DNA repair. Endonuclease that resolves HJ intermediates. Cleaves cruciform DNA by making single-stranded nicks across the HJ at symmetrical positions within the homologous arms, yielding a 5'-phosphate and a 3'-hydroxyl group; requires a central core of homology in the junction. The consensus cleavage sequence is 5'-(A/T)TT(C/G)-3'. Cleavage occurs on the 3'-side of the TT dinucleotide at the point of strand exchange. HJ branch migration catalyzed by RuvA-RuvB allows RuvC to scan DNA until it finds its consensus sequence, where it cleaves and resolves the cruciform DNA. This chain is Crossover junction endodeoxyribonuclease RuvC, found in Shewanella sediminis (strain HAW-EB3).